A 200-amino-acid chain; its full sequence is Molybdenum cofactor guanylyltransferase (200 aa).

Residues 15–17, K28, D74, and D104 each bind GTP; that span reads LAG. D104 is a Mg(2+) binding site.

Belongs to the MobA family. Monomer. Mg(2+) serves as cofactor.

The protein resides in the cytoplasm. It carries out the reaction Mo-molybdopterin + GTP + H(+) = Mo-molybdopterin guanine dinucleotide + diphosphate. Its function is as follows. Transfers a GMP moiety from GTP to Mo-molybdopterin (Mo-MPT) cofactor (Moco or molybdenum cofactor) to form Mo-molybdopterin guanine dinucleotide (Mo-MGD) cofactor. In Pseudomonas fluorescens (strain Pf0-1), this protein is Molybdenum cofactor guanylyltransferase.